The primary structure comprises 320 residues: G-protein coupled receptor homolog FPV021 (320 aa).

Over Met1–Thr18 the chain is Extracellular. The chain crosses the membrane as a helical span at residues Leu19–Ile39. Over Trp40–Thr52 the chain is Cytoplasmic. Residues Ile53 to Ile73 traverse the membrane as a helical segment. Over Thr74 to Ile91 the chain is Extracellular. Cys89 and Cys167 are oxidised to a cystine. Residues Gly92–Ile112 form a helical membrane-spanning segment. Over Asp113–Ile133 the chain is Cytoplasmic. A helical transmembrane segment spans residues Met134 to Phe154. Topologically, residues Lys155–Ser188 are extracellular. N-linked (GlcNAc...) asparagine; by host glycosylation is present at Asn175. Residues Leu189 to Phe209 form a helical membrane-spanning segment. Residues Lys210–Thr222 are Cytoplasmic-facing. Residues Ile223 to Ile243 traverse the membrane as a helical segment. Residues Asp244–Ala260 lie on the Extracellular side of the membrane. A helical membrane pass occupies residues Pro261–Val281. Topologically, residues Gly282 to Asn320 are cytoplasmic.

It belongs to the G-protein coupled receptor 1 family.

It localises to the host cell membrane. This chain is G-protein coupled receptor homolog FPV021, found in Vertebrata (FPV).